Reading from the N-terminus, the 373-residue chain is Glutamate 5-kinase (373 aa).

Lys16 is a binding site for ATP. Ser56, Asp143, and Asn155 together coordinate substrate. 175–176 (TD) serves as a coordination point for ATP. Residues 281 to 359 (RGVVTLDDGA…TKIETLLGYK (79 aa)) enclose the PUA domain.

Belongs to the glutamate 5-kinase family.

Its subcellular location is the cytoplasm. It catalyses the reaction L-glutamate + ATP = L-glutamyl 5-phosphate + ADP. It participates in amino-acid biosynthesis; L-proline biosynthesis; L-glutamate 5-semialdehyde from L-glutamate: step 1/2. Functionally, catalyzes the transfer of a phosphate group to glutamate to form L-glutamate 5-phosphate. This chain is Glutamate 5-kinase, found in Teredinibacter turnerae (strain ATCC 39867 / T7901).